The primary structure comprises 1914 residues: Myosin light chain kinase, smooth muscle (1914 aa).

At Gly2 the chain carries N-acetylalanine. Ig-like C2-type domains are found at residues 33 to 122 and 161 to 249; these read PAFI…VELT and PKFA…AELS. A disulfide bond links Cys182 and Cys233. Position 231 is a phosphotyrosine; by ABL1 (Tyr231). The segment at 286-393 is disordered; the sequence is DSLEAAAKSK…TRQPGLGSQD (108 aa). Residue Ser305 is modified to Phosphoserine. Over residues 318–329 the composition is skewed to basic and acidic residues; sequence RESKLESCKDSP. A compositionally biased stretch (polar residues) spans 331-347; sequence TAPQTPVLQKTSSSITL. Phosphoserine is present on residues Ser343 and Ser365. Ig-like C2-type domains follow at residues 414 to 503 and 514 to 599; these read PKFE…WTLQ and PSFS…AWVT. Cystine bridges form between Cys435-Cys487 and Cys535-Cys583. Phosphotyrosine; by ABL1 and SRC is present on Tyr464. Tyr471 bears the Phosphotyrosine; by SRC mark. Tyr556 carries the phosphotyrosine; by ABL1 modification. Lys608 is modified (N6-acetyllysine). A Phosphotyrosine; by ABL1 modification is found at Tyr611. Ig-like C2-type domains lie at 620 to 711 and 721 to 821; these read PTAP…AVLT and PWFI…ALPR. A disulfide bridge links Cys742 with Cys805. Phosphotyrosine; by ABL1 is present on residues Tyr792 and Tyr846. 4 consecutive repeat copies span residues 868–895, 896–923, 924–951, and 952–979. Positions 868-998 are 5 X 28 AA approximate tandem repeats; sequence DVRGVLKRRV…KKLPAENGSS (131 aa). An actin-binding (calcium/calmodulin-sensitive) region spans residues 923–963; the sequence is MDFRANLQRQVKPKTVSEEERKVHSPQQVDFRSVLAKKGTS. The tract at residues 932–1098 is disordered; the sequence is QVKPKTVSEE…KRSESQGTAP (167 aa). Position 947 is a phosphoserine (Ser947). Residues 948–963 are calmodulin-binding; that stretch reads PQQVDFRSVLAKKGTS. One copy of the 1-5; truncated repeat lies at 980–998; sequence DFRSVLGGKKKLPAENGSS. The 2-1; truncated repeat unit spans residues 999 to 1003; it reads SAETL. The interval 999-1063 is 6 X 12 AA approximate tandem repeats; sequence SAETLNAKAV…KPDENLKSAS (65 aa). 5 tandem repeats follow at residues 1004–1015, 1016–1027, 1028–1039, 1040–1051, and 1052–1063. Residues 1054-1077 are compositionally biased toward basic and acidic residues; sequence KPDENLKSASKEELKKDVKNDVNC. The segment at 1061-1460 is actin-binding (calcium/calmodulin-insensitive); it reads SASKEELKKD…TVTINTEQKV (400 aa). The region spanning 1098–1186 is the Ig-like C2-type 7 domain; that stretch reads PAFKQKLQDV…GQAECSCQVT (89 aa). Cys1119 and Cys1170 are joined by a disulfide. Residues 1192-1237 form a disordered region; sequence ASENTKAPEMKSRRPKSSLPPVLGTESDATVKKKPAPKTPPKAAMP. The 89-residue stretch at 1238-1326 folds into the Ig-like C2-type 8 domain; that stretch reads PQIIQFPEDQ…GSRQAQVNLT (89 aa). Residues 1334–1426 enclose the Fibronectin type-III domain; the sequence is PAGTPCASDI…QESELTTVGE (93 aa). Over residues 1413–1422 the composition is skewed to polar residues; the sequence is SEPSQESELT. The tract at residues 1413–1446 is disordered; the sequence is SEPSQESELTTVGEKPEEPKDEVEVSDDDEKEPE. A compositionally biased stretch (acidic residues) spans 1431 to 1445; the sequence is PKDEVEVSDDDEKEP. A Phosphoserine modification is found at Ser1438. Tyr1449 bears the Phosphotyrosine; by ABL1 mark. The region spanning 1464 to 1719 is the Protein kinase domain; sequence YDIEERLGSG…CTQCLQHPWL (256 aa). ATP is bound by residues 1470 to 1478 and Lys1493; that span reads LGSGKFGQV. At Tyr1575 the chain carries Phosphotyrosine; by ABL1. Asp1585 acts as the Proton acceptor in catalysis. Tyr1635 carries the phosphotyrosine; by ABL1 modification. The interval 1711–1774 is calmodulin-binding; it reads TQCLQHPWLM…SGLSGRKSST (64 aa). A phosphoserine mark is found at Ser1759, Ser1760, Ser1772, Ser1773, and Ser1776. The interval 1767–1787 is disordered; sequence LSGRKSSTGSPTSPLNAEKLE. Residues 1770-1781 show a composition bias toward polar residues; it reads RKSSTGSPTSPL. Phosphothreonine is present on Thr1778. The residue at position 1779 (Ser1779) is a Phosphoserine. An Ig-like C2-type 9 domain is found at 1809–1898; sequence PYFSKTIRDL…GEATCTAELI (90 aa). A disulfide bridge links Cys1830 with Cys1882.

It belongs to the protein kinase superfamily. CAMK Ser/Thr protein kinase family. In terms of assembly, all isoforms including Telokin bind calmodulin. Interacts with SVIL. Interacts with CTTN; this interaction is reduced during thrombin-induced endothelial cell (EC) contraction but is promoted by the barrier-protective agonist sphingosine 1-phosphate (S1P) within lamellipodia. A complex made of ABL1, CTTN and MYLK regulates cortical actin-based cytoskeletal rearrangement critical to sphingosine 1-phosphate (S1P)-mediated endothelial cell (EC) barrier enhancement. Binds to NAA10/ARD1 and PTK2B/PYK2. Mg(2+) serves as cofactor. Requires Ca(2+) as cofactor. Can probably be down-regulated by phosphorylation. Tyrosine phosphorylation by ABL1 increases kinase activity, reverses MLCK-mediated inhibition of Arp2/3-mediated actin polymerization, and enhances CTTN-binding. Phosphorylation by SRC at Tyr-464 and Tyr-471 promotes CTTN binding. Post-translationally, the C-terminus is deglutamylated by AGTPBP1/CCP1, AGBL1/CCP4 and AGBL4/CCP6, leading to the formation of Myosin light chain kinase, smooth muscle, deglutamylated form. The consequences of C-terminal deglutamylation are unknown. In terms of processing, acetylated at Lys-608 by NAA10/ARD1 via a calcium-dependent signaling; this acetylation represses kinase activity and reduces tumor cell migration. Smooth muscle and non-muscle isozymes are expressed in a wide variety of adult and fetal tissues and in cultured endothelium with qualitative expression appearing to be neither tissue- nor development-specific. Non-muscle isoform 2 is the dominant splice variant expressed in various tissues. Telokin has been found in a wide variety of adult and fetal tissues. Accumulates in well differentiated enterocytes of the intestinal epithelium in response to tumor necrosis factor (TNF).

The protein resides in the cytoplasm. The protein localises to the cell projection. It is found in the lamellipodium. It localises to the cleavage furrow. Its subcellular location is the cytoskeleton. The protein resides in the stress fiber. It catalyses the reaction L-seryl-[myosin light chain] + ATP = O-phospho-L-seryl-[myosin light chain] + ADP + H(+). The catalysed reaction is L-threonyl-[myosin light chain] + ATP = O-phospho-L-threonyl-[myosin light chain] + ADP + H(+). With respect to regulation, isoform 1 is activated by phosphorylation on Tyr-464 and Tyr-471. Isoforms which lack these tyrosine residues are not regulated in this way. All catalytically active isoforms require binding to calcium and calmodulin for activation. Repressed by organometallic pyridylnaphthalimide complexes, wortmannin, ML-7 (a synthetic naphthalenesulphonyl derivative that inhibits the binding of ATP to MLCK) and ML-9. Calcium/calmodulin-dependent myosin light chain kinase implicated in smooth muscle contraction via phosphorylation of myosin light chains (MLC). Also regulates actin-myosin interaction through a non-kinase activity. Phosphorylates PTK2B/PYK2 and myosin light-chains. Involved in the inflammatory response (e.g. apoptosis, vascular permeability, leukocyte diapedesis), cell motility and morphology, airway hyperreactivity and other activities relevant to asthma. Required for tonic airway smooth muscle contraction that is necessary for physiological and asthmatic airway resistance. Necessary for gastrointestinal motility. Implicated in the regulation of endothelial as well as vascular permeability, probably via the regulation of cytoskeletal rearrangements. In the nervous system it has been shown to control the growth initiation of astrocytic processes in culture and to participate in transmitter release at synapses formed between cultured sympathetic ganglion cells. Critical participant in signaling sequences that result in fibroblast apoptosis. Plays a role in the regulation of epithelial cell survival. Required for epithelial wound healing, especially during actomyosin ring contraction during purse-string wound closure. Mediates RhoA-dependent membrane blebbing. Triggers TRPC5 channel activity in a calcium-dependent signaling, by inducing its subcellular localization at the plasma membrane. Promotes cell migration (including tumor cells) and tumor metastasis. PTK2B/PYK2 activation by phosphorylation mediates ITGB2 activation and is thus essential to trigger neutrophil transmigration during acute lung injury (ALI). May regulate optic nerve head astrocyte migration. Probably involved in mitotic cytoskeletal regulation. Regulates tight junction probably by modulating ZO-1 exchange in the perijunctional actomyosin ring. Mediates burn-induced microvascular barrier injury; triggers endothelial contraction in the development of microvascular hyperpermeability by phosphorylating MLC. Essential for intestinal barrier dysfunction. Mediates Giardia spp.-mediated reduced epithelial barrier function during giardiasis intestinal infection via reorganization of cytoskeletal F-actin and tight junctional ZO-1. Necessary for hypotonicity-induced Ca(2+) entry and subsequent activation of volume-sensitive organic osmolyte/anion channels (VSOAC) in cervical cancer cells. Responsible for high proliferative ability of breast cancer cells through anti-apoptosis. The protein is Myosin light chain kinase, smooth muscle of Homo sapiens (Human).